Consider the following 60-residue polypeptide: Large ribosomal subunit protein uL30 (60 aa).

Belongs to the universal ribosomal protein uL30 family. Part of the 50S ribosomal subunit.

The sequence is that of Large ribosomal subunit protein uL30 from Albidiferax ferrireducens (strain ATCC BAA-621 / DSM 15236 / T118) (Rhodoferax ferrireducens).